Consider the following 307-residue polypeptide: uncharacterized protein (307 aa).

Composition is skewed to basic and acidic residues over residues 42-52 (TCRSPGEDKCP) and 112-121 (QKKEEPEGSH). The interval 42-153 (TCRSPGEDKC…VPPAVASASA (112 aa)) is disordered. A compositionally biased stretch (basic residues) spans 129 to 139 (KQHKKAKKRKS).

This is an uncharacterized protein from Mus musculus (Mouse).